Here is a 248-residue protein sequence, read N- to C-terminus: Probable transcriptional regulatory protein PsycPRwf_1013 (248 aa).

It belongs to the TACO1 family.

The protein resides in the cytoplasm. This is Probable transcriptional regulatory protein PsycPRwf_1013 from Psychrobacter sp. (strain PRwf-1).